A 92-amino-acid chain; its full sequence is Large ribosomal subunit protein eL31 (92 aa).

Belongs to the eukaryotic ribosomal protein eL31 family.

This is Large ribosomal subunit protein eL31 from Haloquadratum walsbyi (strain DSM 16790 / HBSQ001).